Reading from the N-terminus, the 148-residue chain is Arginine repressor (148 aa).

The protein belongs to the ArgR family.

The protein localises to the cytoplasm. It participates in amino-acid biosynthesis; L-arginine biosynthesis [regulation]. Its function is as follows. Regulates arginine biosynthesis genes. This is Arginine repressor from Chlorobium phaeobacteroides (strain BS1).